The primary structure comprises 478 residues: Probable cytosolic Fe-S cluster assembly factor AAEL012261 (478 aa).

[4Fe-4S] cluster contacts are provided by Cys23, Cys69, Cys72, Cys75, Cys189, Cys245, Cys396, and Cys400.

It belongs to the NARF family.

Component of the cytosolic iron-sulfur (Fe/S) protein assembly machinery. Required for maturation of extramitochondrial Fe/S proteins. This Aedes aegypti (Yellowfever mosquito) protein is Probable cytosolic Fe-S cluster assembly factor AAEL012261.